Here is an 80-residue protein sequence, read N- to C-terminus: Cell division protein ZapB (80 aa).

Positions Phe3–Glu80 form a coiled coil.

This sequence belongs to the ZapB family. As to quaternary structure, homodimer. The ends of the coiled-coil dimer bind to each other, forming polymers. Interacts with FtsZ.

It localises to the cytoplasm. Its function is as follows. Non-essential, abundant cell division factor that is required for proper Z-ring formation. It is recruited early to the divisome by direct interaction with FtsZ, stimulating Z-ring assembly and thereby promoting cell division earlier in the cell cycle. Its recruitment to the Z-ring requires functional FtsA or ZipA. This is Cell division protein ZapB from Vibrio parahaemolyticus serotype O3:K6 (strain RIMD 2210633).